A 734-amino-acid polypeptide reads, in one-letter code: Photosystem I P700 chlorophyll a apoprotein A2 (734 aa).

8 helical membrane-spanning segments follow: residues 46 to 69, 135 to 158, 175 to 199, 273 to 291, 330 to 353, 369 to 395, 417 to 439, and 517 to 535; these read IFASHLGQLAIIFLWTSGNLFHVA, LYTGAFSLLIVSTLFLVAGWLHLE, LNHHLSGLFGVSSLARAGHLVHVAI, IAHHHLAIAVVFIIAGHTY, LHFQLGLALASLGVVTSLVAQHMY, AALYTHHQYIAGFIMTGAFAHGAIFLT, AIISHLSWASLFLGFHTLGLYVH, and FPVHHAIASGLHTTTLILS. Residues Cys-559 and Cys-568 each coordinate [4Fe-4S] cluster. 2 helical membrane-spanning segments follow: residues 575–596 and 643–665; these read AFYPAVFWMLNTIGWVTLHWHW and LSVWAWMFSFGHLVWATGFMFLI. Residues His-654, Met-662, and Tyr-670 each contribute to the chlorophyll a site. A phylloquinone-binding site is contributed by Trp-671. Residues 707–727 form a helical membrane-spanning segment; sequence LVGLAHFSVGYIFTYAAFPIP.

Belongs to the PsaA/PsaB family. The PsaA/B heterodimer binds the P700 chlorophyll special pair and subsequent electron acceptors. PSI consists of a core antenna complex that captures photons, and an electron transfer chain that converts photonic excitation into a charge separation. The eukaryotic PSI reaction center is composed of at least 11 subunits. The cofactor is P700 is a chlorophyll a/chlorophyll a' dimer, A0 is one or more chlorophyll a, A1 is one or both phylloquinones and FX is a shared 4Fe-4S iron-sulfur center..

The protein resides in the plastid. Its subcellular location is the chloroplast thylakoid membrane. The enzyme catalyses reduced [plastocyanin] + hnu + oxidized [2Fe-2S]-[ferredoxin] = oxidized [plastocyanin] + reduced [2Fe-2S]-[ferredoxin]. In terms of biological role, psaA and PsaB bind P700, the primary electron donor of photosystem I (PSI), as well as the electron acceptors A0, A1 and FX. PSI is a plastocyanin-ferredoxin oxidoreductase, converting photonic excitation into a charge separation, which transfers an electron from the donor P700 chlorophyll pair to the spectroscopically characterized acceptors A0, A1, FX, FA and FB in turn. Oxidized P700 is reduced on the lumenal side of the thylakoid membrane by plastocyanin. This Selaginella uncinata (Blue spike-moss) protein is Photosystem I P700 chlorophyll a apoprotein A2.